The following is a 708-amino-acid chain: Putative adhesion G protein-coupled receptor F2P (708 aa).

The Extracellular segment spans residues Met1–Tyr451. Residues Asn21, Asn220, Asn252, Asn260, Asn305, Asn313, and Asn358 are each glycosylated (N-linked (GlcNAc...) asparagine). The GAIN-B domain occupies Met293–Glu442. 2 disulfide bridges follow: Cys394–Cys421 and Cys409–Cys423. A GPS region spans residues Cys394 to Glu442. Residues Val452–Trp472 form a helical membrane-spanning segment. The Cytoplasmic segment spans residues Ser473–Cys487. The helical transmembrane segment at Ile488–Leu508 threads the bilayer. Over Ser509–Leu530 the chain is Extracellular. The helical transmembrane segment at Ser531–Phe551 threads the bilayer. Topologically, residues His552–Ser557 are cytoplasmic. The chain crosses the membrane as a helical span at residues Val558–Thr578. Residues Val579–Ala606 are Extracellular-facing. The helical transmembrane segment at Phe607–Val627 threads the bilayer. The Cytoplasmic portion of the chain corresponds to Lys628 to Lys650. The helical transmembrane segment at Asn651–Ile671 threads the bilayer. The Extracellular segment spans residues Asp672–Arg674. A helical membrane pass occupies residues Ser675–Ser695. Residues Asp696–Leu708 lie on the Cytoplasmic side of the membrane.

Belongs to the G-protein coupled receptor 2 family. Adhesion G-protein coupled receptor (ADGR) subfamily. In terms of tissue distribution, high expression in kidney. Up-regulated in lung adenocarcinomas and prostate cancers.

It localises to the membrane. Functionally, orphan receptor. This Homo sapiens (Human) protein is Putative adhesion G protein-coupled receptor F2P.